Here is a 477-residue protein sequence, read N- to C-terminus: Ankyrin repeat, SAM and basic leucine zipper domain-containing protein 1 (477 aa).

Residues 1 to 24 (MAASSLWGPAVAGGGESSESEDDG) form a disordered region. Residues Ser17, Ser18, and Ser20 each carry the phosphoserine modification. ANK repeat units lie at residues 45–74 (EKNE…SVDS), 78–107 (YGWT…NASF), 110–144 (DKQT…DPNV), 148–177 (RQMT…EVNA), 181–210 (NGYT…NKML), and 214–243 (DGKT…PLEG). The 63-residue stretch at 272-334 (SYTAFGELDL…KILSALKELM (63 aa)) folds into the SAM domain.

As to quaternary structure, interacts with DDX4, PIWIL1, RANBP9 and TDRD1.

The protein resides in the cytoplasm. Plays a central role during spermatogenesis by repressing transposable elements and preventing their mobilization, which is essential for the germline integrity. Acts via the piRNA metabolic process, which mediates the repression of transposable elements during meiosis by forming complexes composed of piRNAs and Piwi proteins and governs the methylation and subsequent repression of transposons. Its association with pi-bodies suggests a participation in the primary piRNAs metabolic process. Required prior to the pachytene stage to facilitate the production of multiple types of piRNAs, including those associated with repeats involved in the regulation of retrotransposons. May act by mediating protein-protein interactions during germ cell maturation. In Echinops telfairi (Lesser hedgehog tenrec), this protein is Ankyrin repeat, SAM and basic leucine zipper domain-containing protein 1 (ASZ1).